Here is a 68-residue protein sequence, read N- to C-terminus: Long neurotoxin 1 (68 aa).

5 cysteine pairs are disulfide-bonded: cysteine 3–cysteine 20, cysteine 13–cysteine 41, cysteine 26–cysteine 30, cysteine 45–cysteine 56, and cysteine 57–cysteine 62.

It belongs to the three-finger toxin family. Long-chain subfamily. Type II alpha-neurotoxin sub-subfamily. As to expression, expressed by the venom gland.

The protein resides in the secreted. In terms of biological role, binds with high affinity to muscular (alpha-1/CHRNA1) and neuronal (alpha-7/CHRNA7) nicotinic acetylcholine receptor (nAChR) and inhibits acetylcholine from binding to the receptor, thereby impairing neuromuscular and neuronal transmission. The sequence is that of Long neurotoxin 1 from Aspidelaps scutatus (Shield-nose snake).